Consider the following 143-residue polypeptide: Putative pre-16S rRNA nuclease (143 aa).

Belongs to the YqgF nuclease family.

Its subcellular location is the cytoplasm. Functionally, could be a nuclease involved in processing of the 5'-end of pre-16S rRNA. This chain is Putative pre-16S rRNA nuclease, found in Ralstonia pickettii (strain 12J).